The chain runs to 1692 residues: Cullin-7 (1692 aa).

Residues 348-421 enclose the CPH domain; it reads RTAFASVNTY…HWHMLEILGF (74 aa). One can recognise a DOC domain in the interval 791–970; sequence PIQIPFFDVF…HTRLFYMVRA (180 aa). Basic and acidic residues predominate over residues 1319 to 1335; the sequence is VAHEDSGKEHKSKKEDA. The tract at residues 1319–1374 is disordered; that stretch reads VAHEDSGKEHKSKKEDAAGETAAVAMADEEEEEGKKEEGEEEEGEGEEELEEEEER. Residues 1357-1374 are compositionally biased toward acidic residues; that stretch reads GEEEEGEGEEELEEEEER. A Glycyl lysine isopeptide (Lys-Gly) (interchain with G-Cter in NEDD8) cross-link involves residue Lys1570.

Belongs to the cullin family. As to quaternary structure, component of the 3M complex, composed of core components CUL7, CCDC8 and OBSL1. Component of the Cul7-RING(FBXW8) complex consisting of CUL7, RBX1, SKP1 and FBXW8. Within the Cul7-RING(FBXW8) complex interacts with FBXW8 and RBX1, but not with SKP1. Interacts with CUL1 (via the C-terminal domain); the interaction seems to be mediated by FBXW8; it is likely specific to FBXW8, but not other F-box proteins. Interacts (via the CPH domain) with p53/TP53; the interaction preferentially involves tetrameric and dimeric p53/TP53; this interaction recruits p53/TP53 for ubiquitination by neddylated CUL1-RBX1. The CUL7-CUL9 heterodimer seems to interact specifically with p53/TP53. Interacts with FBXW8; interaction is mutually exclusive of binding to CUL9 or p53/TP53. Interacts with CUL9; leading to inhibited CUL9 activity. Interacts with OBSL1. Interacts (as part of the 3M complex) with HDAC4 and HDAC5; it is negatively regulated by ANKRA2.

The protein resides in the cytoplasm. It is found in the cytoskeleton. It localises to the microtubule organizing center. The protein localises to the centrosome. Its subcellular location is the perinuclear region. The protein resides in the golgi apparatus. It functions in the pathway protein modification; protein ubiquitination. Its function is as follows. Core component of the 3M and Cul7-RING(FBXW8) complexes, which mediate the ubiquitination and subsequent proteasomal degradation of target proteins. Core component of the 3M complex, a complex required to regulate microtubule dynamics and genome integrity. It is unclear how the 3M complex regulates microtubules, it could act by controlling the level of a microtubule stabilizer. The Cul7-RING(FBXW8) complex alone lacks ubiquitination activity and does not promote polyubiquitination and proteasomal degradation of p53/TP53. However it mediates recruitment of p53/TP53 for ubiquitination by neddylated CUL1-RBX1. Interaction with CUL9 is required to inhibit CUL9 activity and ubiquitination of BIRC5. The Cul7-RING(FBXW8) complex also mediates ubiquitination and consequent degradation of target proteins such as GORASP1, IRS1 and MAP4K1/HPK1. Ubiquitination of GORASP1 regulates Golgi morphogenesis and dendrite patterning in brain. Mediates ubiquitination and degradation of IRS1 in a mTOR-dependent manner: the Cul7-RING(FBXW8) complex recognizes and binds IRS1 previously phosphorylated by S6 kinase (RPS6KB1 or RPS6KB2). The Cul7-RING(FBXW8) complex also mediates ubiquitination of MAP4K1/HPK1: recognizes and binds autophosphorylated MAP4K1/HPK1, leading to its degradation, thereby affecting cell proliferation and differentiation. Acts as a regulator in trophoblast cell epithelial-mesenchymal transition and placental development. While the Cul7-RING(FBXW8) and the 3M complexes are associated and involved in common processes, CUL7 and the Cul7-RING(FBXW8) complex may have additional functions. Probably plays a role in the degradation of proteins involved in endothelial proliferation and/or differentiation. The protein is Cullin-7 (Cul7) of Rattus norvegicus (Rat).